The sequence spans 285 residues: MQIKSLLLAAAAAPAALGAAVGTVKPFNCGTDAPSRQHIQMTKEIAEKEAAFTAAGGVSAQAAINVNVYFHVVASSTSLSGGYVTSTMINNQVSVLNTAYAPHGIQFTLKGTDYTVNSNWAVDGSELAMKKALRKGTYKDLNLYILKDLGDALGYCYFPTSVTSKSNDWYYDGCSILYNTLPGGDLTNYNLGHTSTHEVGHWFGLYHTFQGGCTGNGDYVADTPAQASASSGCPTGRDSCPSQTGLDPIHNYMDYSYDTCYEEFTAGQKTRMTSYFNQYRANASV.

An N-terminal signal peptide occupies residues 1–18; the sequence is MQIKSLLLAAAAAPAALG. Histidine 197 is a Zn(2+) binding site. Glutamate 198 is an active-site residue. Histidine 201 is a binding site for Zn(2+). Cysteine 233 and cysteine 260 form a disulfide bridge. An N-linked (GlcNAc...) asparagine glycan is attached at asparagine 282.

The protein belongs to the peptidase M43B family.

The protein localises to the secreted. Functionally, secreted metalloproteinase that allows assimilation of proteinaceous substrates. This chain is Extracellular metalloprotease SMAC_06893, found in Sordaria macrospora (strain ATCC MYA-333 / DSM 997 / K(L3346) / K-hell).